A 1687-amino-acid polypeptide reads, in one-letter code: A-kinase anchor protein 12 (1687 aa).

Residues 1–108 (MGAGSSTEQR…EKDRVEEMAA (108 aa)) form a disordered region. Gly2 is lipidated: N-myristoyl glycine. Ser11, Ser18, Ser22, and Ser27 each carry phosphoserine. Low complexity predominate over residues 30 to 48 (GPAAEASGAAGDPADADPA). Residues 52 to 62 (PQKNGQLSTVN) are compositionally biased toward polar residues. Positions 75–88 (ENQEGQEEEVVDED) are enriched in acidic residues. Positions 89 to 105 (VGQRESEDVREKDRVEE) are enriched in basic and acidic residues. Residues Ser136 and Ser204 each carry the phosphoserine modification. Disordered stretches follow at residues 175–282 (SDTV…ETTS) and 298–355 (KTSF…DYEK). Residues 213-230 (ASKESELKQSTEKQEGTL) are compositionally biased toward basic and acidic residues. Phosphoserine occurs at positions 235 and 245. Residues 247–259 (QAAEEEAKDEGEE) are compositionally biased toward acidic residues. Residues 254-544 (KDEGEEKQEK…QHIHTESPES (291 aa)) are involved in PKC-binding. Residues Ser268, Ser271, Ser274, and Ser304 each carry the phosphoserine modification. The segment covering 268-282 (SPESPSSPVSSETTS) has biased composition (low complexity). Basic and acidic residues predominate over residues 303 to 321 (KSKEDDLETAEKRKEQEAE). Thr331 is modified (phosphothreonine). The segment covering 334 to 344 (ASEEQEPAEDT) has biased composition (acidic residues). Phosphoserine is present on residues Ser335 and Ser350. Position 353 is a phosphotyrosine (Tyr353). Ser371 is subject to Phosphoserine. Residues 402–481 (VEKTEEEQGG…EKTLPKHPEG (80 aa)) form a disordered region. Over residues 417–426 (GGVVVEGTGE) the composition is skewed to low complexity. Position 469 is a phosphoserine (Ser469). The segment covering 470–480 (PEEKTLPKHPE) has biased composition (basic and acidic residues). Phosphoserine is present on residues Ser491, Ser507, and Ser509. Residues 496-828 (KVQGSPLKKL…INEDDPDVPA (333 aa)) form a disordered region. A compositionally biased stretch (low complexity) spans 499–513 (GSPLKKLFSSSGLKK). Residues 514–523 (LSGKKQKGKR) show a composition bias toward basic residues. The segment covering 533-550 (EYQHIHTESPESADEQKG) has biased composition (basic and acidic residues). Residues Ser541, Ser544, Ser585, Ser599, Ser614, and Ser616 each carry the phosphoserine modification. The short motif at 594–614 (ITPWASFKKMVTPKKRVRRPS) is the AKAP CaM-binding 1 element. Residues 612–626 (RPSESDKEEELEKVK) are compositionally biased toward basic and acidic residues. The segment covering 628-639 (ATLSSTDSTVSE) has biased composition (polar residues). A Phosphothreonine modification is found at Thr629. Residues Ser631, Ser632, Ser635, and Ser638 each carry the phosphoserine modification. Over residues 642–661 (DEVKTVGEEQKPEEPKRRVD) the composition is skewed to basic and acidic residues. Residues Ser683, Ser684, and Ser685 each carry the phosphoserine modification. The span at 697 to 711 (DSHRAEEASKDKEAG) shows a compositional bias: basic and acidic residues. A compositionally biased stretch (polar residues) spans 717 to 726 (ASTQEQDQAQ). Low complexity predominate over residues 727–744 (GSSSPEPAGSPSEGEGVS). 5 positions are modified to phosphoserine: Ser736, Ser748, Ser770, Ser771, and Ser789. The AKAP CaM-binding 2 motif lies at 743–763 (VSTWESFKRLVTPRKKSKSKL). The AKAP CaM-binding 3 signature appears at 784–804 (EESWVSIKKFIPGRRKKRADG). Residue Thr871 is modified to Phosphothreonine. A Phosphoserine modification is found at Ser873. The interval 959 to 981 (ETSEALRTEEVTEASGAEETTDM) is disordered. Residue Lys1030 forms a Glycyl lysine isopeptide (Lys-Gly) (interchain with G-Cter in SUMO1) linkage. The segment covering 1035–1045 (VPATQTVQRTG) has biased composition (polar residues). Disordered stretches follow at residues 1035–1105 (VPAT…EVTA), 1125–1221 (AVAP…LAAA), 1277–1361 (CQEK…QDKA), and 1443–1487 (TPAP…TAIE). At Ser1059 the chain carries Phosphoserine. Residues 1130 to 1157 (SSETLTDSETNGSTPLADSDTADGTQQD) show a composition bias toward polar residues. Basic and acidic residues predominate over residues 1199–1211 (QEEHGEEPGRDVL). Ser1289 is subject to Phosphoserine. Residues 1298–1310 (DVEKEKRETKPEQ) show a composition bias toward basic and acidic residues. 3 positions are modified to phosphoserine: Ser1348, Ser1352, and Ser1354. The segment covering 1462–1487 (QRERSEEEDKPDAGPDADGKESTAIE) has biased composition (basic and acidic residues). Residues 1498 to 1511 (ELESKSNKIVLNVI) form an RII-binding region. Disordered stretches follow at residues 1522-1582 (ETAP…GSAS) and 1599-1687 (IEKL…LAES). Residues 1530 to 1547 (YDSQTQVPAMQADSQGAQ) show a composition bias toward polar residues. 2 positions are modified to phosphoserine: Ser1543 and Ser1571. Low complexity predominate over residues 1618-1630 (QLQSLAQAEASAS). Ser1637 is subject to Phosphoserine. A compositionally biased stretch (basic and acidic residues) spans 1645-1687 (LTEEGDAPKVEVQEEEMSTKSVKENKAQAEEDLQEPKGDLAES).

As to quaternary structure, binds to dimeric RII-alpha regulatory subunit of PKC. In terms of processing, phosphorylated by PKC (in vitro).

Its subcellular location is the cytoplasm. The protein resides in the cytoskeleton. The protein localises to the membrane. Its function is as follows. Anchoring protein that mediates the subcellular compartmentation of protein kinase A (PKA) and protein kinase C (PKC). The chain is A-kinase anchor protein 12 (Akap12) from Rattus norvegicus (Rat).